The primary structure comprises 344 residues: C-C chemokine receptor-like 2 (344 aa).

Topologically, residues 1-43 (MANYTLAPEDEYDVLIEGELESDEAEQCDKYDAQALSAQLVPS) are extracellular. Asn3 is a glycosylation site (N-linked (GlcNAc...) asparagine). Residues 44-64 (LCSAVFVIGVLDNLLVVLILV) form a helical membrane-spanning segment. At 65 to 74 (KYKGLKRVEN) the chain is on the cytoplasmic side. A helical membrane pass occupies residues 75–95 (IYLLNLAVSNLCFLLTLPFWA). Topologically, residues 96–104 (HAGGDPMCK) are extracellular. A disulfide bridge links Cys103 with Cys181. A helical membrane pass occupies residues 105–125 (ILIGLYFVGLYSETFFNCLLT). Residues 126–144 (VQRYLVFLHKGNFFSARRR) are Cytoplasmic-facing. The helical transmembrane segment at 145–165 (VPCGIITSVLAWVTAILATLP) threads the bilayer. The Extracellular portion of the chain corresponds to 166–198 (EFVVYKPQMEDQKYKCAFSRTPFLPADETFWKH). A helical transmembrane segment spans residues 199–219 (FLTLKMNISVLVLPLFIFTFL). Residues 220 to 238 (YVQMRKTLRFREQRYSLFK) lie on the Cytoplasmic side of the membrane. Residues 239 to 259 (LVFAIMVVFLLMWAPYNIAFF) traverse the membrane as a helical segment. Over 260–286 (LSTFKEHFSLSDCKSSYNLDKSVHITK) the chain is Extracellular. The chain crosses the membrane as a helical span at residues 287–307 (LIATTHCCINPLLYAFLDGTF). Residues 308–344 (SKYLCRCFHLRSNTPLQPRGQSAQGTSREEPDHSTEV) lie on the Cytoplasmic side of the membrane. Positions 324–333 (QPRGQSAQGT) are enriched in polar residues. The interval 324-344 (QPRGQSAQGTSREEPDHSTEV) is disordered. The segment covering 334–344 (SREEPDHSTEV) has biased composition (basic and acidic residues).

The protein belongs to the G-protein coupled receptor 1 family. In terms of tissue distribution, expressed abundantly in immunal tissues such as spleen, fetal liver, lymph node and bone marrow. Strong expression also in lung and heart. Expressed in almost all hematopoietic cells including monocytes, macrophages, PMNs, T-cells (both CD4+ and CD8+), monocyte-derived iDCs, NK cells, and CD34+ progenitor cells. B-cells expressed isoform 1 but not isoform 2. Up-regulated on synovial neutrophils of rheumatoid arthritis patients.

The protein resides in the cell membrane. Functionally, receptor for CCL19 and chemerin/RARRES2. Does not appear to be a signaling receptor, but may have a role in modulating chemokine-triggered immune responses by capturing and internalizing CCL19 or by presenting RARRES2 ligand to CMKLR1, a functional signaling receptors. Plays a critical role for the development of Th2 responses. This is C-C chemokine receptor-like 2 (CCRL2) from Homo sapiens (Human).